Reading from the N-terminus, the 156-residue chain is Small ribosomal subunit protein uS7 (156 aa).

This sequence belongs to the universal ribosomal protein uS7 family. As to quaternary structure, part of the 30S ribosomal subunit. Contacts proteins S9 and S11.

One of the primary rRNA binding proteins, it binds directly to 16S rRNA where it nucleates assembly of the head domain of the 30S subunit. Is located at the subunit interface close to the decoding center, probably blocks exit of the E-site tRNA. The protein is Small ribosomal subunit protein uS7 of Prochlorococcus marinus subsp. pastoris (strain CCMP1986 / NIES-2087 / MED4).